The sequence spans 196 residues: Large ribosomal subunit protein bL9 (196 aa).

Positions 174 to 196 are disordered; it reads QAAADLLEGGAGQQASEYTEAQA. The segment covering 186 to 196 has biased composition (polar residues); the sequence is QQASEYTEAQA.

This sequence belongs to the bacterial ribosomal protein bL9 family.

Its function is as follows. Binds to the 23S rRNA. The polypeptide is Large ribosomal subunit protein bL9 (Phenylobacterium zucineum (strain HLK1)).